A 619-amino-acid polypeptide reads, in one-letter code: Manganese lipoxygenase (619 aa).

A signal peptide spans 1–16; that stretch reads MRVLVWIAGLAPLAVA. N-linked (GlcNAc...) asparagine glycosylation is found at N32, N42, N62, N86, N164, and N229. The region spanning 55–619 is the Lipoxygenase domain; the sequence is TLPCEDGNST…PGNIPFYLSV (565 aa). Mn(2+) contacts are provided by H298, H303, H483, and N487. N-linked (GlcNAc...) asparagine glycosylation is found at N515 and N549. A Mn(2+)-binding site is contributed by V619.

Belongs to the lipoxygenase family. Manganese lipoxygenase subfamily. Mn(2+) serves as cofactor.

It localises to the secreted. The enzyme catalyses (9Z,12Z)-octadecadienoate + O2 = (9S)-hydroperoxy-(10E,12Z)-octadecadienoate. It carries out the reaction (9Z,12Z)-octadecadienoate + O2 = (11S)-hydroperoxy-(9Z,12Z)-octadecadienoate. The catalysed reaction is (9Z,12Z)-octadecadienoate + O2 = (13R)-hydroperoxy-(9Z,11E)-octadecadienoate. It catalyses the reaction (9Z,12Z,15Z)-octadecatrienoate + O2 = (9S)-hydroperoxy-(10E,12Z,15Z)-octadecatrienoate. The enzyme catalyses (9Z,12Z,15Z)-octadecatrienoate + O2 = (11R)-hydroperoxy-(9Z,12Z,15Z)-octadecatrienoate. It carries out the reaction (9Z,12Z,15Z)-octadecatrienoate + O2 = (13R)-hydroperoxy-(9Z,11E,15Z)-octadecatrienoate. The catalysed reaction is (9S)-hydroperoxy-(10E,12Z,15Z)-octadecatrienoate + O2 = (9S,16S)-dihydroperoxy-(10E,12Z,14E)-octadecatrienoate. Its function is as follows. Lipoxygenase that metabolizes linoleic and alpha-linolenic acids to 9S-, 11- and 13R-hydroperoxy fatty acids. At the end of lipoxygenation, the intermediate product 11S-HPODE from linoleic acid is then transformed into 9S-HPODE and 13R-HPODE as the final products. The intermediate product 11R-HPOTrE from alpha-linolenic acid is transformed into 9S-HPOTrE and 13R-HPOTrE as the final products. 9S-HPOTrE is further oxidized by the enzyme to 9S,16S-DiHPOTrE as the end product. This Pyricularia oryzae (strain 70-15 / ATCC MYA-4617 / FGSC 8958) (Rice blast fungus) protein is Manganese lipoxygenase.